The following is a 350-amino-acid chain: Protein RecA (350 aa).

66 to 73 is a binding site for ATP; the sequence is GPESSGKT.

Belongs to the RecA family.

Its subcellular location is the cytoplasm. Can catalyze the hydrolysis of ATP in the presence of single-stranded DNA, the ATP-dependent uptake of single-stranded DNA by duplex DNA, and the ATP-dependent hybridization of homologous single-stranded DNAs. It interacts with LexA causing its activation and leading to its autocatalytic cleavage. In Nocardioides sp. (strain ATCC BAA-499 / JS614), this protein is Protein RecA.